We begin with the raw amino-acid sequence, 166 residues long: MAIKLEDKKAIVAEVNEAAKAALSAVVADARGVTVGAMTGLRKEAREAGVYVKVVRNTLLKRAVEGTQFDVLNDVFKGPTLIAFSNEHPGAAARIFREFAKGQDKFEIKAAAFEGQFLAANQIDVLASLPTYDEAVSQLMSVIQGATSKLARTLAAIRDQKEAAAA.

This sequence belongs to the universal ribosomal protein uL10 family. In terms of assembly, part of the ribosomal stalk of the 50S ribosomal subunit. The N-terminus interacts with L11 and the large rRNA to form the base of the stalk. The C-terminus forms an elongated spine to which L12 dimers bind in a sequential fashion forming a multimeric L10(L12)X complex.

Forms part of the ribosomal stalk, playing a central role in the interaction of the ribosome with GTP-bound translation factors. The chain is Large ribosomal subunit protein uL10 from Pseudomonas paraeruginosa (strain DSM 24068 / PA7) (Pseudomonas aeruginosa (strain PA7)).